We begin with the raw amino-acid sequence, 715 residues long: ATP-dependent zinc metalloprotease YME1L1 (715 aa).

The Mitochondrial matrix portion of the chain corresponds to Met1–Leu237. Residues Asn34–Ser54 form a disordered region. Residues Gln41 to Pro52 are compositionally biased toward basic and acidic residues. The chain crosses the membrane as a helical span at residues Ile238 to Val258. The Mitochondrial intermembrane portion of the chain corresponds to Arg259 to Arg715. 6 residues coordinate ATP: Val283, Thr325, Gly326, Lys327, Thr328, and Leu329. His541 contacts Zn(2+). The active site involves Glu542. Residues His545 and Asp619 each coordinate Zn(2+).

This sequence in the N-terminal section; belongs to the AAA ATPase family. The protein in the C-terminal section; belongs to the peptidase M41 family. As to quaternary structure, homohexamer; may also form heterohexamers. Exists in several complexes of 600-1100 kDa. Interacts with AFG1L. Zn(2+) is required as a cofactor. Post-translationally, proteolytically processed by mitochondrial processing peptidase (MPP) to generate the mature form. Degraded in an OMA1-dependent manner in response to oxidative stress. In terms of tissue distribution, detected in heart and skeletal muscle (at protein level).

It is found in the mitochondrion inner membrane. It localises to the mitochondrion. It carries out the reaction ATP + H2O = ADP + phosphate + H(+). In terms of biological role, ATP-dependent metalloprotease that catalyzes the degradation of folded and unfolded proteins with a suitable degron sequence in the mitochondrial intermembrane region. Plays an important role in regulating mitochondrial morphology and function by cleaving OPA1 at position S2, giving rise to a form of OPA1 that promotes maintenance of normal mitochondrial structure and mitochondrial protein metabolism. Ensures cell proliferation, maintains normal cristae morphology and complex I respiration activity, promotes antiapoptotic activity and protects mitochondria from the accumulation of oxidatively damaged membrane proteins. Required to control the accumulation of nonassembled respiratory chain subunits (NDUFB6, OX4 and ND1). Involved in the mitochondrial adaptation in response to various signals, such as stress or developmental cues, by mediating degradation of mitochondrial proteins to rewire the mitochondrial proteome. Catalyzes degradation of mitochondrial proteins, such as translocases, lipid transfer proteins and metabolic enzymes in response to nutrient starvation in order to limit mitochondrial biogenesis: mechanistically, YME1L is activated by decreased phosphatidylethanolamine levels caused by LPIN1 activity in response to mTORC1 inhibition. Acts as a regulator of adult neural stem cell self-renewal by promoting mitochondrial proteome rewiring, preserving neural stem and progenitor cells self-renewal. Required for normal, constitutive degradation of PRELID1. Catalyzes the degradation of OMA1 in response to membrane depolarization. Mediates degradation of TIMM17A downstream of the integrated stress response (ISR). Catalyzes degradation of MICU1 when MICU1 is not assembled via an interchain disulfide. This is ATP-dependent zinc metalloprotease YME1L1 (Yme1l1) from Mus musculus (Mouse).